A 143-amino-acid polypeptide reads, in one-letter code: Transcriptional regulator MraZ (143 aa).

SpoVT-AbrB domains follow at residues 5 to 47 and 76 to 119; these read SHTP…PLAE and ASDD…DSQR.

The protein belongs to the MraZ family. Forms oligomers.

It is found in the cytoplasm. The protein resides in the nucleoid. This is Transcriptional regulator MraZ from Parafrankia sp. (strain EAN1pec).